A 357-amino-acid polypeptide reads, in one-letter code: Glycerol-1-phosphate dehydrogenase [NAD(P)+] (357 aa).

NAD(+)-binding positions include 104–108 (GKTID) and 126–129 (TAAS). Asp131 contacts substrate. Residue Ser135 participates in NAD(+) binding. Position 178 (Asp178) interacts with substrate. Residues Asp178 and His258 each coordinate Zn(2+). A substrate-binding site is contributed by His262. His274 lines the Zn(2+) pocket.

The protein belongs to the glycerol-1-phosphate dehydrogenase family. It depends on Zn(2+) as a cofactor.

The protein resides in the cytoplasm. The catalysed reaction is sn-glycerol 1-phosphate + NAD(+) = dihydroxyacetone phosphate + NADH + H(+). It carries out the reaction sn-glycerol 1-phosphate + NADP(+) = dihydroxyacetone phosphate + NADPH + H(+). It participates in membrane lipid metabolism; glycerophospholipid metabolism. Catalyzes the NAD(P)H-dependent reduction of dihydroxyacetonephosphate (DHAP or glycerone phosphate) to glycerol 1-phosphate (G1P). The G1P thus generated is used as the glycerophosphate backbone of phospholipids in the cellular membranes of Archaea. This chain is Glycerol-1-phosphate dehydrogenase [NAD(P)+], found in Methanococcoides burtonii (strain DSM 6242 / NBRC 107633 / OCM 468 / ACE-M).